Consider the following 130-residue polypeptide: Small ribosomal subunit protein uS8 (130 aa).

It belongs to the universal ribosomal protein uS8 family. As to quaternary structure, part of the 30S ribosomal subunit.

Its function is as follows. One of the primary rRNA binding proteins, it binds directly to 16S rRNA central domain where it helps coordinate assembly of the platform of the 30S subunit. The sequence is that of Small ribosomal subunit protein uS8 from Methanococcoides burtonii (strain DSM 6242 / NBRC 107633 / OCM 468 / ACE-M).